The sequence spans 773 residues: Glucan endo-1,3-beta-D-glucosidase (773 aa).

The tract at residues 1–194 (MPPGAKVPQA…KNYFSIAVLP (194 aa)) is beta-sandwich subdomain. Residues 1-647 (MPPGAKVPQA…HWICNLDSLG (647 aa)) enclose the GH81 domain. Ile31, Asn34, Gln35, Tyr36, and Ala89 together coordinate Mg(2+). Positions 195–288 (DNTVSTLTYY…QGTSFKTVYR (94 aa)) are alpha/beta subdomain. A (alpha/beta)6 barrel subdomain region spans residues 298–647 (DKGTYDREAL…HWICNLDSLG (350 aa)). Positions 327 and 331 each coordinate (1,3-beta-D-glucosyl)n. Residues Asp365, Thr368, Glu373, and Lys376 each coordinate Ca(2+). The (1,3-beta-D-glucosyl)n site is built by Asp402 and His406. Residue Asp402 is part of the active site. Residues Leu454, Arg455, and Phe457 each contribute to the Ca(2+) site. 3 residues coordinate (1,3-beta-D-glucosyl)n: Asn477, Glu479, and Glu483. Catalysis depends on residues Glu479 and Glu483. Positions 527, 618, 619, and 621 each coordinate Mg(2+). Asp712, Asn714, Asp716, Gly717, Lys718, Asp723, Asp748, Ile749, Asn750, Asp752, Lys754, and Asp759 together coordinate Ca(2+).

Belongs to the glycosyl hydrolase 81 family. Requires Ca(2+) as cofactor. It depends on Mg(2+) as a cofactor.

It is found in the secreted. The catalysed reaction is Hydrolysis of (1-&gt;3)-beta-D-glucosidic linkages in (1-&gt;3)-beta-D-glucans.. Inhibited by manganese, zinc, and copper ions. Its function is as follows. Cleaves internal linkages in 1,3-beta-glucan. May contribute to plant biomass degradation. The sequence is that of Glucan endo-1,3-beta-D-glucosidase from Acetivibrio thermocellus (strain ATCC 27405 / DSM 1237 / JCM 9322 / NBRC 103400 / NCIMB 10682 / NRRL B-4536 / VPI 7372) (Clostridium thermocellum).